Here is a 130-residue protein sequence, read N- to C-terminus: Small ribosomal subunit protein uS12c (130 aa).

The protein belongs to the universal ribosomal protein uS12 family. As to quaternary structure, part of the 30S ribosomal subunit.

Its subcellular location is the plastid. It is found in the chloroplast. Its function is as follows. With S4 and S5 plays an important role in translational accuracy. Located at the interface of the 30S and 50S subunits. The chain is Small ribosomal subunit protein uS12c (rps12) from Tetradesmus obliquus (Green alga).